We begin with the raw amino-acid sequence, 404 residues long: MSIPTYMDYSATTPVDERVAQKMIQFLTKDGNFGNSASNSHYYGWQADEAVKKARQQVANLIDADPKEIVWTSGATESNNLAIKGVAHFYHKKGKHIITLKTEHKSVLDTCRQLEREGFEVTYLDPMSNGLLDLNILRDAMREDTILVSIMHVNNEIGVIQDIESIGNLCHQNNIFFHVDAAQSAGKVAISLSELSVDLMSFSAHKIYGPKGMGALYVRRKPRVRIEAQMHGGGHERGMRSGTLATHQIVGMGEAFAIAQAEMREENTKIRQLRDRLLVGFIDMEEVVVNGDMESRIPGNLNISFNYVEGESLMMAINDIAVSSGSACTSLSLEPSYVLRALGLNDELAHSSIRFTIGRYTTEAQIDKAIDLVRAKVDKLRDLSPLWDMFKDGVDISKVEWSAH.

Pyridoxal 5'-phosphate-binding positions include 75–76 (AT), asparagine 155, glutamine 183, and 203–205 (SAH). Lysine 206 bears the N6-(pyridoxal phosphate)lysine mark. Threonine 243 contacts pyridoxal 5'-phosphate. Catalysis depends on cysteine 328, which acts as the Cysteine persulfide intermediate. Cysteine 328 serves as a coordination point for [2Fe-2S] cluster.

This sequence belongs to the class-V pyridoxal-phosphate-dependent aminotransferase family. NifS/IscS subfamily. In terms of assembly, homodimer. Forms a heterotetramer with IscU, interacts with other sulfur acceptors. It depends on pyridoxal 5'-phosphate as a cofactor.

The protein resides in the cytoplasm. The enzyme catalyses (sulfur carrier)-H + L-cysteine = (sulfur carrier)-SH + L-alanine. The protein operates within cofactor biosynthesis; iron-sulfur cluster biosynthesis. Its function is as follows. Master enzyme that delivers sulfur to a number of partners involved in Fe-S cluster assembly, tRNA modification or cofactor biosynthesis. Catalyzes the removal of elemental sulfur atoms from cysteine to produce alanine. Functions as a sulfur delivery protein for Fe-S cluster synthesis onto IscU, an Fe-S scaffold assembly protein, as well as other S acceptor proteins. This is Cysteine desulfurase IscS from Vesicomyosocius okutanii subsp. Calyptogena okutanii (strain HA).